A 182-amino-acid polypeptide reads, in one-letter code: UPF0398 protein lwe1908 (182 aa).

It belongs to the UPF0398 family.

The protein is UPF0398 protein lwe1908 of Listeria welshimeri serovar 6b (strain ATCC 35897 / DSM 20650 / CCUG 15529 / CIP 8149 / NCTC 11857 / SLCC 5334 / V8).